The primary structure comprises 247 residues: L-cystine import ATP-binding protein TcyC (247 aa).

In terms of domain architecture, ABC transporter spans 2–240; the sequence is LTVKGLNKSF…PKEERTQRFL (239 aa). 34–41 provides a ligand contact to ATP; that stretch reads GPSGSGKT.

Belongs to the ABC transporter superfamily. L-cystine importer (TC 3.A.1.3.14) family. As to quaternary structure, the complex is composed of two ATP-binding proteins (TcyC), two transmembrane proteins (TcyB) and a solute-binding protein (TcyA).

Its subcellular location is the cell membrane. Its function is as follows. Part of the ABC transporter complex TcyABC involved in L-cystine import. Responsible for energy coupling to the transport system. This Bacillus subtilis (strain 168) protein is L-cystine import ATP-binding protein TcyC (tcyC).